Reading from the N-terminus, the 687-residue chain is Adhesion G-protein coupled receptor G1 (687 aa).

Positions 1–25 (MAVQVLRQMVYFLLSLFSLVQGAHS) are cleaved as a signal peptide. Residue 26 to 33 (GSPREDFR) coordinates heparin. Residues 26–402 (GSPREDFRFC…TEVEATHKHY (377 aa)) lie on the Extracellular side of the membrane. 2 disulfides stabilise this stretch: Cys-35–Cys-91 and Cys-121–Cys-177. 3 N-linked (GlcNAc...) asparagine glycosylation sites follow: Asn-39, Asn-148, and Asn-171. 190–200 (LQHPQKAAKRP) is a heparin binding site. Residues 224–395 (DTLSFEEDRV…AVLMVSSTEV (172 aa)) enclose the GAIN-B domain. 4 N-linked (GlcNAc...) asparagine glycosylation sites follow: Asn-234, Asn-303, Asn-324, and Asn-341. Cystine bridges form between Cys-346-Cys-377 and Cys-366-Cys-379. Residues 346-395 (CVFWVEDPASSSTGSWSSAGCETVSRDTQTSCLCNHLTYFAVLMVSSTEV) form a GPS region. The segment at 384-397 (YFAVLMVSSTEVEA) is stachel. A helical membrane pass occupies residues 403–423 (LTLLSYVGCVISALACVFTIA). The Cytoplasmic segment spans residues 424–442 (AYLCSRRKSRDYTIKVHMN). Residues 443–463 (LLSAVFLLDVSFLLSEPVALT) form a helical membrane-spanning segment. At 464 to 471 (GSEAACRT) the chain is on the extracellular side. A helical transmembrane segment spans residues 472 to 492 (SAMFLHFSLLACLSWMGLEGY). Residues 493–512 (NLYRLVVEVFGTYVPGYLLK) lie on the Cytoplasmic side of the membrane. Residues 513–533 (LSIVGWGFPVFLVTLVALVDV) form a helical membrane-spanning segment. Residues 534–570 (NNYGPIILAVRRTPERVTYPSMCWIRDSLVSYVTNLG) lie on the Extracellular side of the membrane. A helical membrane pass occupies residues 571–591 (LFSLVFLFNLAMLATMVVQIL). Over 592–603 (RLRPHSQNWPHV) the chain is Cytoplasmic. The helical transmembrane segment at 604-624 (LTLLGLSLVLGLPWALVFFSF) threads the bilayer. Residues 625–630 (ASGTFQ) lie on the Extracellular side of the membrane. A helical transmembrane segment spans residues 631–651 (LVILYLFSIITSFQGFLIFLW). Topologically, residues 652–687 (YWSMRFQAQGGPSPLKNNSDSAKLPISSGSTSSSRI) are cytoplasmic. Residues 664-687 (SPLKNNSDSAKLPISSGSTSSSRI) are disordered. A compositionally biased stretch (low complexity) spans 678–687 (SSGSTSSSRI).

The protein belongs to the G-protein coupled receptor 2 family. LN-TM7 subfamily. In terms of assembly, heterodimer of 2 chains generated by proteolytic processing; the large extracellular N-terminal fragment (ADGRG1 NT) and the membrane-bound C-terminal fragment (ADGRG1-CT) predominantly remain associated and non-covalently linked. ADGRG1 NT self-associates in a trans-trans manner; the homophilic interaction enhances receptor signaling. Interacts with TGM2. Interacts with heparin; leading to the reduction of ADGRG1 shedding. Interacts with COL3A1. Part of a GPCR-tetraspanin complex at least consisting of ADGRG1, CD81, eventually CD9, and GNA11 in which CD81 is enhancing the association of ADGRG1 with GNA11. In terms of processing, autoproteolytically cleaved into 2 fragments; the large extracellular N-terminal fragment and the membroune-bound C-terminal fragment predominantly remain associated and non-covalently linked. Post-translationally, N-glycosylated. The secreted ADGRG1 N-terminal fragment is heavily glycosylated. Ubiquitinated. Undergoes polyubiquitination upon activation. As to expression, expressed in neural progenitor cells in fetal forbrain. Expressed in migrating neurons. Expressed in radial glial endfeet (at protein level). Expressed in peritubular myoid cells, Sertoli cells, and germ cells of the testis.

It is found in the cell membrane. The protein resides in the secreted. Its subcellular location is the membrane raft. Forms a heterodimer of 2 chains generated by proteolytic processing that remain associated through non-covalent interactions mediated by the GAIN-B domain. In the inactivated receptor, the Stachel sequence (also named stalk) is embedded in the GAIN-B domain, where it adopts a beta-strand conformation. On activation, the Stachel moves into the 7 transmembrane region and adopts a twisted hook-shaped configuration that forms contacts within the receptor, leading to coupling of a G-alpha protein, which activates signaling. The cleaved GAIN-B and N-terminal domains can then dissociate from the rest of the receptor. Activated by the small-molecule agonist, 3-alpha-acetoxydihydrodeoxygedunin (3-alpha-DOG). Adhesion G-protein coupled receptor (aGPCR) for steroid hormone 17alpha-hydroxypregnenolone (17-OH), which is involved in cell adhesion and cell-cell interactions. Ligand binding causes a conformation change that triggers signaling via guanine nucleotide-binding proteins (G proteins) and modulates the activity of downstream effectors, such as RhoA pathway. ADGRG1 is coupled to G(12) and/or G(13) G proteins (GNA12 and GNA13, respectively) and mediates the activation Rho small GTPases. Acts as a potent suppressor of ferroptosis: binding to 17-OH-binding initiates signaling that down-regulates CD36 and alleviates ferroptosis-induced liver injury. Ligand-binding also induces cell adhesion activity via association with proteins such as collagen III/COL3A1 and TGM2. Mediates cell matrix adhesion in developing neurons and hematopoietic stem cells. Involved in cortical development, specifically in maintenance of the pial basement membrane integrity and in cortical lamination: association with COL3A1 in the developing brain inhibits neuronal migration via activation of the RhoA pathway. Together with TGM2, acts as a regulator of myelination and myelin repair in oligodendrocyte precursor cells. Acts as a hemostatic sensor of shear force: G protein-coupled receptor signaling is activated in response to shear force in platelets, promoting G(13) G protein signaling, and platelet shape change and aggregation in a COL3A1-dependent manner. Acts as an inhibitor of VEGFA production thereby inhibiting angiogenesis through a signaling pathway mediated by PRKCA. Plays a role in the maintenance of hematopoietic stem cells in bone marrow niche. Plays an essential role in testis development. Functionally, adhesion G-protein coupled receptor (aGPCR) for phosphatidylserine, which is involved in microglia-mediated synapse pruning during development. Required to maintain appropriate synaptic numbers in several brain regions in a time- and circuit-dependent fashion: phosphatidylserine-binding acts as a 'eat-me' signal for apoptotic cells, leading to microglial engulfment of phosphatidylserine-positive synapses. The protein is Adhesion G-protein coupled receptor G1 of Mus musculus (Mouse).